Consider the following 198-residue polypeptide: Recombination protein RecR (198 aa).

The C4-type zinc finger occupies 56-71; sequence CTTCGNIDTHDPCAIC. The Toprim domain occupies 79–174; the sequence is RSLCVVEEVS…RLTQLAHGLP (96 aa).

The protein belongs to the RecR family.

In terms of biological role, may play a role in DNA repair. It seems to be involved in an RecBC-independent recombinational process of DNA repair. It may act with RecF and RecO. This is Recombination protein RecR from Sphingopyxis alaskensis (strain DSM 13593 / LMG 18877 / RB2256) (Sphingomonas alaskensis).